We begin with the raw amino-acid sequence, 154 residues long: UPF0547 protein C16orf87 homolog (154 aa).

Positions 43-119 (NAKHSEKSPP…KHEEEREKQE (77 aa)) are disordered. The span at 68-84 (VRREKINSTVNKDLENR) shows a compositional bias: basic and acidic residues. S91 carries the phosphoserine modification. A coiled-coil region spans residues 104–132 (KSSSAKKHEEEREKQEKEIDIYANLSDEK). The span at 109–119 (KKHEEEREKQE) shows a compositional bias: basic and acidic residues.

Belongs to the UPF0547 family.

This is UPF0547 protein C16orf87 homolog from Mus musculus (Mouse).